Reading from the N-terminus, the 362-residue chain is Transcription factor Sox-7 (362 aa).

The segment at 21 to 41 (EDLSDGLSPHRSPREKGSETR) is disordered. The span at 32–41 (SPREKGSETR) shows a compositional bias: basic and acidic residues. Residues 42–110 (IRRPMNAFMV…QHMQDYPNYK (69 aa)) constitute a DNA-binding region (HMG box). The Sox C-terminal domain maps to 245-362 (QTGSSMIPPV…ATYYNSYSVS (118 aa)).

Expressed in the embryonic pronephric sinus as well as posterior cardinal veins.

The protein localises to the nucleus. Functionally, transcription factor. Binds to the DNA sequence 5'-AACAAT-3'. Acts downstream of vegt and upstream of nodal signaling to promote endodermal and mesodermal differentiation by promoting vegt-induced expression of both endodermal genes (including endodermin) and mesodermal genes (including snai1/snail and snai2/slug). Induces expression of multiple nodal genes (including nodal, nodal2, nodal4, nodal5 and nodal6) and binds directly to sites within the promoter of the nodal5 gene. The endodermal and mesodermal specification pathways then interact to initiate cardiogenesis. Acts partially redundantly with sox18 during cardiogenesis. Also acts as an antagonist of beta-catenin signaling. Regulates (possibly indirectly) development of the pronephros, the functional larval kidney. The protein is Transcription factor Sox-7 of Xenopus tropicalis (Western clawed frog).